A 449-amino-acid chain; its full sequence is POU domain, class 3, transcription factor 1 (449 aa).

Disordered stretches follow at residues 1-22 (MATT…TGPL), 76-108 (GGGG…GGGG), 132-152 (AHHL…HQPQ), 184-251 (GLHH…PSSD), and 393-449 (KRMT…GSVQ). Composition is skewed to gly residues over residues 11–20 (GPGGGAGGTG) and 93–108 (AGGG…GGGG). A compositionally biased stretch (low complexity) spans 132–143 (AHHLGPAMSPSP). Basic and acidic residues predominate over residues 188–197 (ALHEDGHEAQ). Low complexity predominate over residues 218 to 230 (AGGLHAAAAHLHP). Residues 245–319 (EDAPSSDDLE…LLNKWLEETD (75 aa)) enclose the POU-specific domain. Positions 337-396 (KRKKRTSIEVGVKGALESHFLKCPKPSAHEITGLADSLQLEKEVVRVWFCNRRQKEKRMT) form a DNA-binding region, homeobox. The span at 425-434 (PSAPPPPPPA) shows a compositional bias: pro residues.

This sequence belongs to the POU transcription factor family. Class-3 subfamily.

The protein resides in the nucleus. Its function is as follows. Transcription factor that binds to the octamer motif (5'-ATTTGCAT-3'). Acts as a transcriptional activator when binding cooperatively with SOX4, SOX11, or SOX12 to gene promoters. Acts as a transcriptional repressor of myelin-specific genes. The protein is POU domain, class 3, transcription factor 1 (Pou3f1) of Mus musculus (Mouse).